The primary structure comprises 69 residues: DNA gyrase inhibitor YacG (69 aa).

Positions 7, 10, 26, and 30 each coordinate Zn(2+).

Belongs to the DNA gyrase inhibitor YacG family. Interacts with GyrB. Zn(2+) serves as cofactor.

Its function is as follows. Inhibits all the catalytic activities of DNA gyrase by preventing its interaction with DNA. Acts by binding directly to the C-terminal domain of GyrB, which probably disrupts DNA binding by the gyrase. This Shewanella baltica (strain OS155 / ATCC BAA-1091) protein is DNA gyrase inhibitor YacG.